The chain runs to 541 residues: Membrane protein insertase YidC (541 aa).

6 helical membrane passes run 7–27 (FLIV…GVTH), 289–309 (YLLT…VTLP), 356–376 (IIHS…LAFY), 430–450 (LPIL…LEMV), 463–483 (LSAQ…MFAQ), and 498–518 (IMMA…SGLV).

The protein belongs to the OXA1/ALB3/YidC family. Type 1 subfamily. In terms of assembly, interacts with the Sec translocase complex via SecD. Specifically interacts with transmembrane segments of nascent integral membrane proteins during membrane integration.

The protein resides in the cell inner membrane. Functionally, required for the insertion and/or proper folding and/or complex formation of integral membrane proteins into the membrane. Involved in integration of membrane proteins that insert both dependently and independently of the Sec translocase complex, as well as at least some lipoproteins. Aids folding of multispanning membrane proteins. This is Membrane protein insertase YidC from Ruthia magnifica subsp. Calyptogena magnifica.